A 159-amino-acid chain; its full sequence is Ribosomal RNA large subunit methyltransferase H (159 aa).

S-adenosyl-L-methionine is bound by residues Leu-76, Gly-108, and 127–132 (FSKMTF).

This sequence belongs to the RNA methyltransferase RlmH family. Homodimer.

Its subcellular location is the cytoplasm. The enzyme catalyses pseudouridine(1915) in 23S rRNA + S-adenosyl-L-methionine = N(3)-methylpseudouridine(1915) in 23S rRNA + S-adenosyl-L-homocysteine + H(+). Functionally, specifically methylates the pseudouridine at position 1915 (m3Psi1915) in 23S rRNA. This is Ribosomal RNA large subunit methyltransferase H from Geobacillus kaustophilus (strain HTA426).